The chain runs to 581 residues: Suppressor of cytokine signaling 7 (581 aa).

Disordered stretches follow at residues 1–23 (MVFR…EPGP), 89–109 (PPPP…DPTE), 123–272 (EAES…RTQS), and 297–316 (QRGL…RRSL). 3 stretches are compositionally biased toward pro residues: residues 89–99 (PPPPQPQPPAA), 154–164 (PPGPELPPVPF), and 187–198 (QPPPPPPPPGPL). The tract at residues 124 to 494 (AESLETNSCS…GKFLYFLRSR (371 aa)) is mediates interaction with SORBS3. The segment covering 208 to 219 (GSFKIRLSRLFR) has biased composition (basic residues). The segment covering 303–313 (PHPPTPPPPPR) has biased composition (pro residues). Residues 400–509 (WYWGPMNWED…PTPVQLLYPV (110 aa)) enclose the SH2 domain. Residues 504–554 (QLLYPVSRFSNVKSLQHLCRFRIRQLVRIDHIPDLPLPKPLISYIRKFYYY) form the SOCS box domain.

As to quaternary structure, substrate-recognition component of the ECS(SOCS7) complex, composed of SOCS7, CUL5, ELOB, ELOC and RNF7/RBX2. Interacts, via the third proline-rich region, with the second SH3 domain of the adapter protein NCK1. Also interacts with GRB2, INSR, PLCG1, SORBS3/vinexin, and phosphorylated STAT3 and STAT5. Interacts with SEPT6. Interacts with phosphorylated IRS4 and PIK3R1. Expressed in brain and leukocytes. Also in fetal lung fibroblasts and fetal brain.

The protein localises to the cytoplasm. The protein resides in the nucleus. It is found in the cell membrane. Its pathway is protein modification; protein ubiquitination. Substrate-recognition component of a cullin-5-RING E3 ubiquitin-protein ligase complex (ECS complex, also named CRL5 complex), which mediates the ubiquitination and subsequent proteasomal degradation of target proteins, such as DAB1 and IRS1. Specifically recognizes and binds phosphorylated proteins via its SH2 domain, promoting their ubiquitination. The ECS(SOCS7) complex acts as a key regulator of reelin signaling by mediating ubiquitination and degradation of phosphorylated DAB1 in the cortical plate of the developing cerebral cortex, thereby regulating neuron positioning during cortex development. Functions in insulin signaling and glucose homeostasis through IRS1 ubiquitination and subsequent proteasomal degradation. Also inhibits prolactin, growth hormone and leptin signaling by preventing STAT3 and STAT5 activation, sequestering them in the cytoplasm and reducing their binding to DNA. In Homo sapiens (Human), this protein is Suppressor of cytokine signaling 7.